Consider the following 348-residue polypeptide: Outer membrane protein A (348 aa).

Residues 1-21 (MKKTAIAIAVALAGFATVAQA) form the signal peptide. A run of 8 beta stranded transmembrane segments spans residues 27 to 37 (TWYTGAKLGWS), 55 to 66 (QLGAGAFGGYQV), 70 to 78 (VGFEMGYDW), 96 to 107 (QGVQLTAKLGYP), 112 to 120 (LDIYTRLGG), 146 to 155 (PVFAGGVEYA), 160 to 167 (IATRLEYQ), and 186 to 194 (LLSLGVSYR). The tract at residues 201 to 210 (APVVAPAPAP) is hinge-like. Repeat copies occupy residues 205 to 206 (AP), 207 to 208 (AP), and 209 to 210 (AP). The interval 205 to 210 (APAPAP) is 3 X 2 AA tandem repeats of A-P. In terms of domain architecture, OmpA-like spans 212 to 340 (VQTKHFTLKS…RVEIEVKGIK (129 aa)). Cysteine 313 and cysteine 325 are oxidised to a cystine.

It belongs to the outer membrane OOP (TC 1.B.6) superfamily. OmpA family. Monomer and homodimer. In terms of assembly, (Microbial infection) Upon infection with phage Sf6 associates with the mature bacteriophage capsid. Was originally suggested to be within the bacteriophage capsid. This has been disproven.

Its subcellular location is the extracellular vesicle. It localises to the cell outer membrane. In terms of biological role, with TolR probably plays a role in maintaining the position of the peptidoglycan cell wall in the periplasm. Acts as a porin with low permeability that allows slow penetration of small solutes; an internal gate slows down solute passage. Its function is as follows. Required for conjugation with F-type plasmids; probably serves as the mating receptor on recipient cells. Functionally, (Microbial infection) Serves as a secondary receptor during phage Sf6 infection; infection requires both lipopolysaccharide (LPS) and the OmpA beta-barrel. The polypeptide is Outer membrane protein A (Shigella flexneri).